The sequence spans 254 residues: MSVSVERFGQGPDLVLLHGWGMNGAVWHGIAQQLAAHYRLHLVDLPGFGNSPLREGSDYSLPWLAEQIAIVLPQKCHLLGWSLGGLVASQLALTQPERLHSLITVASSPCFMARDEWPGIAPKVLTGFNQMLAGDFRQTIERFLAIQAMGSEHARDDIRQLRHWLAERPAPQFAALEAGLGLLADVDLRDELLQLSLPWLRVYGRLDSLVPKASIALLDERYPASHSVVLEKASHAPFISHPQQFVEIVRYFVG.

The 229-residue stretch at 14 to 242 (LVLLHGWGMN…ASHAPFISHP (229 aa)) folds into the AB hydrolase-1 domain. Substrate-binding positions include W20, 82-83 (SL), and 143-147 (FLAIQ). The active-site Nucleophile is S82. Residues D207 and H235 contribute to the active site. H235 provides a ligand contact to substrate.

It belongs to the AB hydrolase superfamily. Carboxylesterase BioH family. Monomer.

The protein localises to the cytoplasm. The catalysed reaction is 6-carboxyhexanoyl-[ACP] methyl ester + H2O = 6-carboxyhexanoyl-[ACP] + methanol + H(+). It functions in the pathway cofactor biosynthesis; biotin biosynthesis. The physiological role of BioH is to remove the methyl group introduced by BioC when the pimeloyl moiety is complete. It allows to synthesize pimeloyl-ACP via the fatty acid synthetic pathway through the hydrolysis of the ester bonds of pimeloyl-ACP esters. This is Pimeloyl-[acyl-carrier protein] methyl ester esterase from Aeromonas salmonicida (strain A449).